The primary structure comprises 264 residues: Taurine import ATP-binding protein TauB (264 aa).

Residues 4–233 (LQLERISAQY…RYAAGESARA (230 aa)) enclose the ABC transporter domain. 38–45 (GPSGSGKT) provides a ligand contact to ATP.

Belongs to the ABC transporter superfamily. Taurine importer (TC 3.A.1.17.1) family. As to quaternary structure, the complex is composed of two ATP-binding proteins (TauB), two transmembrane proteins (TauC) and a solute-binding protein (TauA).

The protein resides in the cell inner membrane. It catalyses the reaction taurine(out) + ATP + H2O = taurine(in) + ADP + phosphate + H(+). Its function is as follows. Part of the ABC transporter complex TauABC involved in taurine import. Responsible for energy coupling to the transport system. The chain is Taurine import ATP-binding protein TauB from Pseudomonas fluorescens (strain Pf0-1).